A 360-amino-acid chain; its full sequence is MTVPKFKKFKIEAYKPGKSNIAKIRNIIKLSANESALGVSPRVKKILQNKKLLISKYPDGKAKNLRKEISKKFKCDFERIICGAGSDEIIQMICQLYLKPSDEVIVPQYSFLMYRIYAQIVGAKVVFSKEKNFKVSINEIIKKVTRKTKLVFIANPNNPTGTYLTRAELIDLRKKLNKNILLVLDDAYFEYMKNKDYKSGLDLFKNKDNVVVIRTFSKIYGLASLRVGWGHGPKKIISAMNLIRPPFNVNQVAQMAAIEALKDRKFINNSVKHNIREANKVRNALQKLKILSNEVTANFLLLNFDRCKFSANYIFNKLQSKGIILRSTEDGYNIKNKLRLTIGSTKENMRFITTIKAIFN.

At K218 the chain carries N6-(pyridoxal phosphate)lysine.

The protein belongs to the class-II pyridoxal-phosphate-dependent aminotransferase family. Histidinol-phosphate aminotransferase subfamily. As to quaternary structure, homodimer. It depends on pyridoxal 5'-phosphate as a cofactor.

The enzyme catalyses L-histidinol phosphate + 2-oxoglutarate = 3-(imidazol-4-yl)-2-oxopropyl phosphate + L-glutamate. It functions in the pathway amino-acid biosynthesis; L-histidine biosynthesis; L-histidine from 5-phospho-alpha-D-ribose 1-diphosphate: step 7/9. In Pelagibacter ubique (strain HTCC1062), this protein is Histidinol-phosphate aminotransferase.